We begin with the raw amino-acid sequence, 285 residues long: Diphthine methyl ester synthase (285 aa).

S-adenosyl-L-methionine contacts are provided by residues Leu-9, Asp-84, Gly-87, 112–113, and Leu-163; that span reads SI. Ser-171 carries the phosphoserine modification. Val-225 and His-250 together coordinate S-adenosyl-L-methionine.

It belongs to the diphthine synthase family.

The catalysed reaction is 2-[(3S)-amino-3-carboxypropyl]-L-histidyl-[translation elongation factor 2] + 4 S-adenosyl-L-methionine = diphthine methyl ester-[translation elongation factor 2] + 4 S-adenosyl-L-homocysteine + 3 H(+). It participates in protein modification; peptidyl-diphthamide biosynthesis. S-adenosyl-L-methionine-dependent methyltransferase that catalyzes four methylations of the modified target histidine residue in translation elongation factor 2 (EF-2), to form an intermediate called diphthine methyl ester. The four successive methylation reactions represent the second step of diphthamide biosynthesis. The chain is Diphthine methyl ester synthase (DPH5) from Homo sapiens (Human).